The primary structure comprises 220 residues: Ribonuclease HII (220 aa).

In terms of domain architecture, RNase H type-2 spans 27–220 (CIIVGVDEVG…SKISYMFKNS (194 aa)). Residues Asp-33, Glu-34, and Asp-128 each coordinate a divalent metal cation.

This sequence belongs to the RNase HII family. The cofactor is Mn(2+). Requires Mg(2+) as cofactor.

It is found in the cytoplasm. The catalysed reaction is Endonucleolytic cleavage to 5'-phosphomonoester.. Its function is as follows. Endonuclease that specifically degrades the RNA of RNA-DNA hybrids. The sequence is that of Ribonuclease HII from Ehrlichia ruminantium (strain Gardel).